The following is a 202-amino-acid chain: Probable pathogenesis-related protein CaO19.2336 (202 aa).

A signal peptide spans M1–G20. N-linked (GlcNAc...) asparagine glycosylation is found at N58 and N152. The region spanning L66–Y179 is the SCP domain.

This sequence belongs to the CRISP family.

Its subcellular location is the secreted. In terms of biological role, secreted protein that acts as a virulence factor during infections. The sequence is that of Probable pathogenesis-related protein CaO19.2336 from Candida albicans (strain SC5314 / ATCC MYA-2876) (Yeast).